Consider the following 254-residue polypeptide: Sulfoacetaldehyde reductase (254 aa).

Residue 8-32 participates in NADP(+) binding; sequence FITGATSGFGEAAAQVFADAGWSLV. Residue S141 coordinates substrate. Y154 (proton acceptor) is an active-site residue.

It belongs to the short-chain dehydrogenases/reductases (SDR) family. Homodimer and heterotetramer.

The enzyme catalyses 2-hydroxyethane-1-sulfonate + NADP(+) = sulfoacetaldehyde + NADPH + H(+). The protein operates within organosulfur degradation. Catalyzes the formation of isethionate from 2-sulfoacetaldehyde in the deaminative pathway of taurine. The enzyme is specific for NADPH; NADH is not a substrate. The polypeptide is Sulfoacetaldehyde reductase (isfD) (Klebsiella oxytoca).